The following is a 721-amino-acid chain: Exo beta-1,2-glucooligosaccharide sophorohydrolase (non-reducing end) (721 aa).

Positions 1–18 (MKHIALLTTLLLSASLQA) are cleaved as a signal peptide. A Glycoamylase-like domain is found at 474–708 (NHKLIGWNET…LLWNLFMSHP (235 aa)).

As to quaternary structure, monomer.

Its subcellular location is the periplasm. It carries out the reaction [(1-&gt;2)-beta-D-glucosyl](n) + H2O = [(1-&gt;2)-beta-D-glucosyl](n-2) + sophorose. Functionally, catalyzes the hydrolysis of linear beta-1,2-glucan and beta-1,2-glucooligosaccharides with degrees of polymerization (DPs) greater than or equal to 4, to produce sophorose. The best substrates are tetra- and pentasaccharides. Acts as an exo-type enzyme that releases sophorose from the non-reducing end of the substrate. It cannot hydrolyze cyclic beta-1,2-glucans. The polypeptide is Exo beta-1,2-glucooligosaccharide sophorohydrolase (non-reducing end) (Parabacteroides distasonis (strain ATCC 8503 / DSM 20701 / CIP 104284 / JCM 5825 / NCTC 11152)).